A 98-amino-acid polypeptide reads, in one-letter code: Cytochrome c-552 (98 aa).

The N-terminal stretch at 1-18 is a signal peptide; that stretch reads MKKFLLVAVVGLAGITFA. Cys-28, Cys-31, His-32, and Met-77 together coordinate heme c.

The protein belongs to the cytochrome c family. Post-translationally, binds 1 heme c group covalently per subunit.

Functionally, reacts with hydrogenase. The sequence is that of Cytochrome c-552 from Hydrogenobacter thermophilus (strain DSM 6534 / IAM 12695 / TK-6).